The sequence spans 220 residues: Catechol O-methyltransferase (220 aa).

Residues Val-44, Glu-66, 68–69 (GT), Ser-74, Glu-92, and Ala-121 contribute to the S-adenosyl-L-methionine site. Asp-139 lines the a divalent metal cation pocket. S-adenosyl-L-methionine is bound at residue Asp-141. 2 residues coordinate a divalent metal cation: Asp-165 and Asn-166.

Belongs to the class I-like SAM-binding methyltransferase superfamily. Cation-dependent O-methyltransferase family. Homodimer. The cofactor is a divalent metal cation.

It catalyses the reaction a catechol + S-adenosyl-L-methionine = a guaiacol + S-adenosyl-L-homocysteine + H(+). Its activity is regulated as follows. Inhibited by EDTA. In terms of biological role, catechol O-methyltransferase that can use various catechol-like compounds such as gallic acid (GA), 3,4-dihydroxy-5-methoxy-benzoic acid (5OMeBA), protocatechuic acid (PCA), 3,4-dihydroxy-benzaldehyde (DHA), dopamine, caffeic acid (CA), luteolin, quercetin, and 5-hydroxyuridine. The protein is Catechol O-methyltransferase of Mycobacterium tuberculosis (strain ATCC 25618 / H37Rv).